The following is a 436-amino-acid chain: Arginine-hydroxylase NDUFAF5, mitochondrial (436 aa).

The transit peptide at 1–25 directs the protein to the mitochondrion; it reads MLRTTFRKGFNLKCFSKDWNQTRQY. Residues 365–436 form a disordered region; that stretch reads VTLSQQQQQQ…DEINKNKDDK (72 aa). Positions 369-380 are enriched in low complexity; the sequence is QQQQQQGIEPQQ. Composition is skewed to basic and acidic residues over residues 391-411 and 421-436; these read PKTD…HFEK and QNKE…KDDK.

This sequence belongs to the methyltransferase superfamily.

The protein resides in the mitochondrion. Functionally, involved in the assembly of mitochondrial NADH:ubiquinone oxidoreductase complex (complex I, MT-ND1) at early stages. Probably acts as an arginine hydroxylase. May also have methyltransferase activity. This Dictyostelium discoideum (Social amoeba) protein is Arginine-hydroxylase NDUFAF5, mitochondrial.